The sequence spans 95 residues: Aspartyl/glutamyl-tRNA(Asn/Gln) amidotransferase subunit C (95 aa).

Belongs to the GatC family. As to quaternary structure, heterotrimer of A, B and C subunits.

It catalyses the reaction L-glutamyl-tRNA(Gln) + L-glutamine + ATP + H2O = L-glutaminyl-tRNA(Gln) + L-glutamate + ADP + phosphate + H(+). The enzyme catalyses L-aspartyl-tRNA(Asn) + L-glutamine + ATP + H2O = L-asparaginyl-tRNA(Asn) + L-glutamate + ADP + phosphate + 2 H(+). In terms of biological role, allows the formation of correctly charged Asn-tRNA(Asn) or Gln-tRNA(Gln) through the transamidation of misacylated Asp-tRNA(Asn) or Glu-tRNA(Gln) in organisms which lack either or both of asparaginyl-tRNA or glutaminyl-tRNA synthetases. The reaction takes place in the presence of glutamine and ATP through an activated phospho-Asp-tRNA(Asn) or phospho-Glu-tRNA(Gln). This chain is Aspartyl/glutamyl-tRNA(Asn/Gln) amidotransferase subunit C, found in Pseudomonas fluorescens (strain SBW25).